A 233-amino-acid chain; its full sequence is EDDIEADHVGVYGTTVYQSPGDIGQFTHEFDGDEWFYVDLDKKETVWMLPEFGQLTSFDPQGGLQNIAVVKHNLEILTKRSNFTPAANEAPQATVFPKSPVLLGQPNTLICFVDNIFPPVINITWLRNSKSVTDGVYETSFLVNRDHSFHKLSYLTFIPSDDDIYDCKVEHWGLEEPVLKHWEPEIPAPMSELTETVVCALGLSVGLVGIVVGTIFIIQGLRSGGTSRHPGPL.

The segment at 1–88 (EDDIEADHVG…KRSNFTPAAN (88 aa)) is alpha-1. The Extracellular portion of the chain corresponds to 1 to 195 (EDDIEADHVG…IPAPMSELTE (195 aa)). Residues 89–182 (EAPQATVFPK…GLEEPVLKHW (94 aa)) form an alpha-2 region. The 93-residue stretch at 91–183 (PQATVFPKSP…LEEPVLKHWE (93 aa)) folds into the Ig-like C1-type domain. Cys-111 and Cys-167 are joined by a disulfide. N-linked (GlcNAc...) asparagine glycosylation occurs at Asn-122. Positions 183–195 (EPEIPAPMSELTE) are connecting peptide. The chain crosses the membrane as a helical span at residues 196-221 (TVVCALGLSVGLVGIVVGTIFIIQGL). The Cytoplasmic segment spans residues 222–233 (RSGGTSRHPGPL).

Belongs to the MHC class II family.

It localises to the membrane. The polypeptide is H-2 class II histocompatibility antigen, A-R alpha chain (H2-Aa) (Mus musculus (Mouse)).